We begin with the raw amino-acid sequence, 192 residues long: Transcription antitermination protein NusB (192 aa).

It belongs to the NusB family.

Its function is as follows. Involved in transcription antitermination. Required for transcription of ribosomal RNA (rRNA) genes. Binds specifically to the boxA antiterminator sequence of the ribosomal RNA (rrn) operons. This is Transcription antitermination protein NusB from Lactococcus lactis subsp. lactis (strain IL1403) (Streptococcus lactis).